Reading from the N-terminus, the 418-residue chain is Serine hydroxymethyltransferase (418 aa).

(6S)-5,6,7,8-tetrahydrofolate contacts are provided by residues L121 and 125–127 (GHL). Residue K230 is modified to N6-(pyridoxal phosphate)lysine. 356-358 (SPF) contributes to the (6S)-5,6,7,8-tetrahydrofolate binding site.

The protein belongs to the SHMT family. In terms of assembly, homodimer. The cofactor is pyridoxal 5'-phosphate.

It localises to the cytoplasm. It catalyses the reaction (6R)-5,10-methylene-5,6,7,8-tetrahydrofolate + glycine + H2O = (6S)-5,6,7,8-tetrahydrofolate + L-serine. Its pathway is one-carbon metabolism; tetrahydrofolate interconversion. It participates in amino-acid biosynthesis; glycine biosynthesis; glycine from L-serine: step 1/1. In terms of biological role, catalyzes the reversible interconversion of serine and glycine with tetrahydrofolate (THF) serving as the one-carbon carrier. This reaction serves as the major source of one-carbon groups required for the biosynthesis of purines, thymidylate, methionine, and other important biomolecules. Also exhibits THF-independent aldolase activity toward beta-hydroxyamino acids, producing glycine and aldehydes, via a retro-aldol mechanism. The chain is Serine hydroxymethyltransferase from Alteromonas mediterranea (strain DSM 17117 / CIP 110805 / LMG 28347 / Deep ecotype).